The sequence spans 327 residues: Interleukin-12 subunit beta (327 aa).

The N-terminal stretch at 1 to 22 (MHPQQLVVSWFSLVLLASPIVA) is a signal peptide. The Ig-like C2-type domain maps to 23-106 (IWELEKNVYV…LSRSLLLLHK (84 aa)). Residues cysteine 50 and cysteine 90 are joined by a disulfide bond. An N-linked (GlcNAc...) asparagine glycan is attached at asparagine 223. Positions 238-327 (PPKNLQLRPL…WSEWASVSCS (90 aa)) constitute a Fibronectin type-III domain.

This sequence belongs to the IL-12B family. As to quaternary structure, heterodimer with IL12A; disulfide-linked. The heterodimer is known as interleukin IL-12. Heterodimer with IL23A; disulfide-linked. The heterodimer is known as interleukin IL-23. Also secreted as a monomer. Interacts with NBR1; this interaction promotes IL-12 secretion.

The protein resides in the secreted. Its function is as follows. Cytokine that can act as a growth factor for activated T and NK cells, enhance the lytic activity of NK/lymphokine-activated killer cells, and stimulate the production of IFN-gamma by resting PBMC. Functionally, associates with IL23A to form the IL-23 interleukin, a heterodimeric cytokine which functions in innate and adaptive immunity. IL-23 may constitute with IL-17 an acute response to infection in peripheral tissues. IL-23 binds to a heterodimeric receptor complex composed of IL12RB1 and IL23R, activates the Jak-Stat signaling cascade, stimulates memory rather than naive T-cells and promotes production of pro-inflammatory cytokines. IL-23 induces autoimmune inflammation and thus may be responsible for autoimmune inflammatory diseases and may be important for tumorigenesis. In Capra hircus (Goat), this protein is Interleukin-12 subunit beta (IL12B).